Consider the following 103-residue polypeptide: Large ribosomal subunit protein bL21 (103 aa).

This sequence belongs to the bacterial ribosomal protein bL21 family. Part of the 50S ribosomal subunit. Contacts protein L20.

This protein binds to 23S rRNA in the presence of protein L20. The polypeptide is Large ribosomal subunit protein bL21 (Shewanella putrefaciens (strain CN-32 / ATCC BAA-453)).